A 2472-amino-acid chain; its full sequence is Highly reducing polyketide synthase xilA (2472 aa).

A Ketosynthase family 3 (KS3) domain is found at 1–417 (MPGGVRDLPA…GTNGHCIIDD (417 aa)). Active-site for beta-ketoacyl synthase activity residues include C162, H298, and H340. The tract at residues 442–502 (NDINGKSGTN…QRKHHHPKTD (61 aa)) is disordered. Low complexity predominate over residues 450-489 (TNGANGANRVNGVNGVNGVNGVNGANGHSNASLLSNGSNN). Residues 597–932 (FIFTGQGAQW…CTGTLFVHNV (336 aa)) form the Malonyl-CoA:ACP transacylase (MAT) domain. Residues 991–1129 (HDLLGSKVPG…GQIKVEVAKF (139 aa)) form an N-terminal hotdog fold region. Residues 991 to 1294 (HDLLGSKVPG…FTSLNNEQES (304 aa)) form the PKS/mFAS DH domain. H1023 (proton acceptor; for dehydratase activity) is an active-site residue. The segment at 1141–1294 (GRLVDAQTWY…FTSLNNEQES (154 aa)) is C-terminal hotdog fold. D1207 functions as the Proton donor; for dehydratase activity in the catalytic mechanism. The interval 1289 to 1505 (NNEQESPSTG…IITVHALRSI (217 aa)) is methyltransferase (CMeT) domain. An Enoyl reductase (ER) domain is found at 1724–2036 (GLLTSLYFKP…KGTHIGKMVI (313 aa)). Residues 2060 to 2239 (ASYILVGGLS…ATTVSLGFIK (180 aa)) enclose the Ketoreductase (KR) domain. A Carrier domain is found at 2391-2469 (ETVKLVSDAI…SIARVIVEEA (79 aa)). S2428 is subject to O-(pantetheine 4'-phosphoryl)serine.

Pantetheine 4'-phosphate is required as a cofactor.

It participates in secondary metabolite biosynthesis. Functionally, highly reducing polyketide synthase; part of the gene cluster that mediates the biosynthesis of the 6-methyl-2-pyrone derivative xylariolide D. XilA produces the 5-alkyl-6-methyl-2-pyrone backbone called prexylariolide D via sequential condensations of 4 malonyl-CoA units with one acetyl-CoA starter unit. During the biosynthesis, the linear polyketide chain is branched by the addition of an acetyl unit as the origin of the methyl group at the 2-pyrone ring. Prexylariolide D is then hydroxylated at the side chain by xilC to form the final product, xylariolide D. The protein is Highly reducing polyketide synthase xilA of Penicillium crustosum (Blue mold fungus).